An 822-amino-acid polypeptide reads, in one-letter code: MTSRFGQLTYTSFDAVGTVGGWQVKETSDALTPEETQLMLAGVRTVFRTVEPMPDYPTPEQLEAAPRRLAYSRVGETYAALWHTVPAGADSTGRPGNVFAHVLLDRTPDVAPRHRAIQWWRSPHWLCPYGATAVSRAALAEPGAEPGRVVTKDSVVAFALDTTTWRLATLFGLLDAVAAALDGGPPVVLGVESPDNAAQWIGLLSFLMSPGTAAQLSFSTFDRADQLNPHSGQMLSAVPLEDLSAVPAGMVAISEAETLSLGELGGEPHRTAGGYAIDVTPWSAMAQVVVLDPGSARRLLDDIDAVAEQVRDSGLHPAWPMAMAVAGRAEFADAEEEAHEVIAAHSPPGVAVGSAAARTISGVLSAAVGTTTADAWRAVQELPTGPGAVFADTTYLCRAVTDDEWLSENSPIPLGPRMFHGKPIPPPLRTAIGRALDPGRGPQRLLQVADLLVRAGVEDPRIRTTLVEDVVPRLGDAEVRERVGADARLTLGAVLLNDGDANGTAIDDGLLDWLADTAPLPPPDELAQATPWDRTWTIAALRGVRARRRGTGGAGQDAGALLWWLRATGSADFEQTATASAWNPEDLLLAIGADPLPGAAAVRTLVAAADSPALNRLAAKVIDENGDTLAVACAAVRTIEPTVWLQQRYVETHQHAYVPLWDEVLSVVDPADVHPDFSTRLLAFALLGLFTGHPYPRACSGFAASDRLGGEAIERLMPLVGEGQLAPHAVVAIGLLRAAAPPDPAHPDVTLDELAGHLAEQVATGMAGDDNDVDGVVAVMAQLSGDSAEPALRGYRKMVTKLLARRGDSPSLTARLRGGRQA.

Its function is as follows. May be involved in assembly of the ESX-1 / type VII specialized secretion system (T7SS), which exports several proteins including EsxA and EsxB. Involved in DNA conjugation in recipient (MDK8) but not donor (mc(2)155) strain. In Mycolicibacterium smegmatis (strain ATCC 700084 / mc(2)155) (Mycobacterium smegmatis), this protein is Putative ESX-1 scaffolding and assembly protein SaeB.